Reading from the N-terminus, the 155-residue chain is Small ribosomal subunit protein uS9 (155 aa).

The protein belongs to the universal ribosomal protein uS9 family.

The sequence is that of Small ribosomal subunit protein uS9 from Rhizobium johnstonii (strain DSM 114642 / LMG 32736 / 3841) (Rhizobium leguminosarum bv. viciae).